The chain runs to 76 residues: Protein OPG128 (76 aa).

The cysteines at positions 17 and 21 are disulfide-linked.

This sequence belongs to the orthopoxvirus OPG128 family. Interacts with sulfhydryl oxidase OPG072; this interaction involves formation of a transient disulfide-bonded intermediate, allowing disulfide bond transfer. Interacts with OPG088; this interaction involves formation of a transient disulfide-bonded intermediate, allowing disulfide bond transfer.

Late protein which probably participates in disulfide bond formation by functioning as a thiol-disulfide transfer protein between membrane-associated OPG072 and OPG08. The complete pathway for formation of disulfide bonds in intracellular virion membrane proteins sequentially involves oxidation of OPG072, OPG128 and OPG08. This Homo sapiens (Human) protein is Protein OPG128 (OPG128).